Here is a 168-residue protein sequence, read N- to C-terminus: NADH-quinone oxidoreductase subunit I (168 aa).

4Fe-4S ferredoxin-type domains follow at residues 58–88 (LRTY…IEAQ) and 99–128 (VRYD…EGPN). Cysteine 68, cysteine 71, cysteine 74, cysteine 78, cysteine 108, cysteine 111, cysteine 114, and cysteine 118 together coordinate [4Fe-4S] cluster.

It belongs to the complex I 23 kDa subunit family. NDH-1 is composed of 14 different subunits. Subunits NuoA, H, J, K, L, M, N constitute the membrane sector of the complex. The cofactor is [4Fe-4S] cluster.

The protein resides in the cell inner membrane. It carries out the reaction a quinone + NADH + 5 H(+)(in) = a quinol + NAD(+) + 4 H(+)(out). Its function is as follows. NDH-1 shuttles electrons from NADH, via FMN and iron-sulfur (Fe-S) centers, to quinones in the respiratory chain. The immediate electron acceptor for the enzyme in this species is believed to be ubiquinone. Couples the redox reaction to proton translocation (for every two electrons transferred, four hydrogen ions are translocated across the cytoplasmic membrane), and thus conserves the redox energy in a proton gradient. The protein is NADH-quinone oxidoreductase subunit I of Ehrlichia ruminantium (strain Gardel).